A 192-amino-acid chain; its full sequence is Crossover junction endodeoxyribonuclease RuvC (192 aa).

Residues D20, E80, and D153 contribute to the active site. Mg(2+) is bound by residues D20, E80, and D153.

This sequence belongs to the RuvC family. In terms of assembly, homodimer which binds Holliday junction (HJ) DNA. The HJ becomes 2-fold symmetrical on binding to RuvC with unstacked arms; it has a different conformation from HJ DNA in complex with RuvA. In the full resolvosome a probable DNA-RuvA(4)-RuvB(12)-RuvC(2) complex forms which resolves the HJ. Mg(2+) serves as cofactor.

The protein localises to the cytoplasm. The enzyme catalyses Endonucleolytic cleavage at a junction such as a reciprocal single-stranded crossover between two homologous DNA duplexes (Holliday junction).. In terms of biological role, the RuvA-RuvB-RuvC complex processes Holliday junction (HJ) DNA during genetic recombination and DNA repair. Endonuclease that resolves HJ intermediates. Cleaves cruciform DNA by making single-stranded nicks across the HJ at symmetrical positions within the homologous arms, yielding a 5'-phosphate and a 3'-hydroxyl group; requires a central core of homology in the junction. The consensus cleavage sequence is 5'-(A/T)TT(C/G)-3'. Cleavage occurs on the 3'-side of the TT dinucleotide at the point of strand exchange. HJ branch migration catalyzed by RuvA-RuvB allows RuvC to scan DNA until it finds its consensus sequence, where it cleaves and resolves the cruciform DNA. This chain is Crossover junction endodeoxyribonuclease RuvC, found in Christiangramia forsetii (strain DSM 17595 / CGMCC 1.15422 / KT0803) (Gramella forsetii).